We begin with the raw amino-acid sequence, 1113 residues long: Carbamoyl phosphate synthase large chain (1113 aa).

The interval 1–407 is carboxyphosphate synthetic domain; that stretch reads MPKRSDINHV…ALNKALRSLE (407 aa). Positions 134, 174, 180, 181, 213, 215, 220, 246, 247, 248, 290, and 304 each coordinate ATP. The region spanning 138–333 is the ATP-grasp 1 domain; the sequence is KDIVTTIGGE…IAKMAAKLAI (196 aa). Mg(2+) contacts are provided by glutamine 290, glutamate 304, and asparagine 306. The Mn(2+) site is built by glutamine 290, glutamate 304, and asparagine 306. The oligomerization domain stretch occupies residues 408-565; the sequence is TKQQGFWTKP…ELDPAAESEV (158 aa). Residues 566 to 967 form a carbamoyl phosphate synthetic domain region; sequence APQTEREKVL…AYAKAEAGAF (402 aa). In terms of domain architecture, ATP-grasp 2 spans 695–886; that stretch reads GALLNREQLP…LAKAASRIAV (192 aa). Positions 731, 770, 772, 777, 802, 803, 804, 805, 845, and 857 each coordinate ATP. The Mg(2+) site is built by glutamine 845, glutamate 857, and asparagine 859. Mn(2+)-binding residues include glutamine 845, glutamate 857, and asparagine 859. Positions 968-1113 constitute an MGS-like domain; sequence GALPTEGTVF…LQELDHAVKA (146 aa). Residues 968-1113 form an allosteric domain region; that stretch reads GALPTEGTVF…LQELDHAVKA (146 aa).

It belongs to the CarB family. Composed of two chains; the small (or glutamine) chain promotes the hydrolysis of glutamine to ammonia, which is used by the large (or ammonia) chain to synthesize carbamoyl phosphate. Tetramer of heterodimers (alpha,beta)4. The cofactor is Mg(2+). Requires Mn(2+) as cofactor.

The catalysed reaction is hydrogencarbonate + L-glutamine + 2 ATP + H2O = carbamoyl phosphate + L-glutamate + 2 ADP + phosphate + 2 H(+). The enzyme catalyses hydrogencarbonate + NH4(+) + 2 ATP = carbamoyl phosphate + 2 ADP + phosphate + 2 H(+). It functions in the pathway amino-acid biosynthesis; L-arginine biosynthesis; carbamoyl phosphate from bicarbonate: step 1/1. Its pathway is pyrimidine metabolism; UMP biosynthesis via de novo pathway; (S)-dihydroorotate from bicarbonate: step 1/3. In terms of biological role, large subunit of the glutamine-dependent carbamoyl phosphate synthetase (CPSase). CPSase catalyzes the formation of carbamoyl phosphate from the ammonia moiety of glutamine, carbonate, and phosphate donated by ATP, constituting the first step of 2 biosynthetic pathways, one leading to arginine and/or urea and the other to pyrimidine nucleotides. The large subunit (synthetase) binds the substrates ammonia (free or transferred from glutamine from the small subunit), hydrogencarbonate and ATP and carries out an ATP-coupled ligase reaction, activating hydrogencarbonate by forming carboxy phosphate which reacts with ammonia to form carbamoyl phosphate. The polypeptide is Carbamoyl phosphate synthase large chain (Corynebacterium glutamicum (strain ATCC 13032 / DSM 20300 / JCM 1318 / BCRC 11384 / CCUG 27702 / LMG 3730 / NBRC 12168 / NCIMB 10025 / NRRL B-2784 / 534)).